The following is a 490-amino-acid chain: AP-5 complex subunit mu-1 (490 aa).

Residues 206 to 476 (KPQVSISITE…LISSDYYIWN (271 aa)) form the MHD domain.

Belongs to the adaptor complexes medium subunit family. Probably part of the adaptor protein complex 5 (AP-5) a tetramer composed of AP5B1, AP5M1, AP5S1 and AP5Z1. Expressed in various tumor cell lines including Jurkat, Hep-G2 and HeLa.

The protein resides in the cytoplasm. Its subcellular location is the cytosol. The protein localises to the late endosome membrane. It localises to the lysosome membrane. In terms of biological role, as part of AP-5, a probable fifth adaptor protein complex it may be involved in endosomal transport. According to PubMed:18395520, it may play a role in cell death. The chain is AP-5 complex subunit mu-1 (AP5M1) from Homo sapiens (Human).